The sequence spans 317 residues: Ribosomal protein L11 methyltransferase (317 aa).

Residues Thr-158, Gly-179, Asp-201, and Asn-244 each contribute to the S-adenosyl-L-methionine site.

The protein belongs to the methyltransferase superfamily. PrmA family.

The protein localises to the cytoplasm. It carries out the reaction L-lysyl-[protein] + 3 S-adenosyl-L-methionine = N(6),N(6),N(6)-trimethyl-L-lysyl-[protein] + 3 S-adenosyl-L-homocysteine + 3 H(+). In terms of biological role, methylates ribosomal protein L11. This chain is Ribosomal protein L11 methyltransferase, found in Streptococcus pyogenes serotype M6 (strain ATCC BAA-946 / MGAS10394).